The primary structure comprises 565 residues: Probable beta-glucosidase btgE (565 aa).

The signal sequence occupies residues 1 to 18 (MRGAILATAAALAGTAMA). Positions 246-304 (TGQDEPTSAPAAPSTTAVPATTTAAPETTTAAPDTTTAVPSTSSAAPSSSSTAPASTGA) are disordered. Positions 251-304 (PTSAPAAPSTTAVPATTTAAPETTTAAPDTTTAVPSTSSAAPSSSSTAPASTGA) are enriched in low complexity. The active-site Proton donor is Glu-405. Catalysis depends on Glu-501, which acts as the Nucleophile.

It belongs to the glycosyl hydrolase 17 family.

Its subcellular location is the secreted. It localises to the cell wall. The catalysed reaction is Hydrolysis of terminal, non-reducing beta-D-glucosyl residues with release of beta-D-glucose.. The protein operates within glycan metabolism; cellulose degradation. Its function is as follows. Beta-glucosidases are one of a number of cellulolytic enzymes involved in the degradation of cellulosic biomass. Catalyzes the last step releasing glucose from the inhibitory cellobiose. In Aspergillus fumigatus (strain CBS 144.89 / FGSC A1163 / CEA10) (Neosartorya fumigata), this protein is Probable beta-glucosidase btgE (btgE).